The sequence spans 108 residues: Small ribosomal subunit protein bS6 (108 aa).

The protein belongs to the bacterial ribosomal protein bS6 family.

In terms of biological role, binds together with bS18 to 16S ribosomal RNA. This chain is Small ribosomal subunit protein bS6, found in Trichormus variabilis (strain ATCC 29413 / PCC 7937) (Anabaena variabilis).